Here is a 189-residue protein sequence, read N- to C-terminus: Potassium-transporting ATPase KdpC subunit (189 aa).

Residues 5-25 (LLPALTMLLVFTVITGIVYPL) form a helical membrane-spanning segment.

Belongs to the KdpC family. In terms of assembly, the system is composed of three essential subunits: KdpA, KdpB and KdpC.

It localises to the cell membrane. Part of the high-affinity ATP-driven potassium transport (or Kdp) system, which catalyzes the hydrolysis of ATP coupled with the electrogenic transport of potassium into the cytoplasm. This subunit acts as a catalytic chaperone that increases the ATP-binding affinity of the ATP-hydrolyzing subunit KdpB by the formation of a transient KdpB/KdpC/ATP ternary complex. This chain is Potassium-transporting ATPase KdpC subunit, found in Mycobacterium bovis (strain ATCC BAA-935 / AF2122/97).